The sequence spans 412 residues: Ribosomal RNA large subunit methyltransferase G (412 aa).

The interval 386-412 is disordered; sequence KAEPHENGESSSDTPNPQSSLYGGVKR. The segment covering 394 to 406 has biased composition (polar residues); it reads ESSSDTPNPQSSL.

This sequence belongs to the methyltransferase superfamily. RlmG family.

It is found in the cytoplasm. The enzyme catalyses guanosine(1835) in 23S rRNA + S-adenosyl-L-methionine = N(2)-methylguanosine(1835) in 23S rRNA + S-adenosyl-L-homocysteine + H(+). Specifically methylates the guanine in position 1835 (m2G1835) of 23S rRNA. This Shewanella sediminis (strain HAW-EB3) protein is Ribosomal RNA large subunit methyltransferase G.